Consider the following 127-residue polypeptide: Protein translocase subunit SecE (127 aa).

The next 3 membrane-spanning stretches (helical) occupy residues 16-36 (AMKWIVVAILLIVAIVGNYLY), 41-61 (LPLRALAVVILIAAAGGVALL), and 96-116 (IVAAVTAVMSLILWGLDGILV).

The protein belongs to the SecE/SEC61-gamma family. In terms of assembly, component of the Sec protein translocase complex. Heterotrimer consisting of SecY, SecE and SecG subunits. The heterotrimers can form oligomers, although 1 heterotrimer is thought to be able to translocate proteins. Interacts with the ribosome. Interacts with SecDF, and other proteins may be involved. Interacts with SecA.

It localises to the cell inner membrane. Its function is as follows. Essential subunit of the Sec protein translocation channel SecYEG. Clamps together the 2 halves of SecY. May contact the channel plug during translocation. The sequence is that of Protein translocase subunit SecE from Salmonella typhi.